A 458-amino-acid chain; its full sequence is E3 ubiquitin-protein ligase RNF25 (458 aa).

The RWD domain maps to 18 to 128 (SEVEVLESIY…EKGKEILTDN (111 aa)). The Zn(2+) site is built by cysteine 135, cysteine 138, cysteine 153, histidine 155, cysteine 161, cysteine 197, and cysteine 200. The RING-type zinc-finger motif lies at 135–201 (CVICLYGFQE…AVGVQCPVCR (67 aa)). 2 disordered regions span residues 267 to 299 (PPAP…TSAT) and 317 to 458 (KTPG…EDGS). 2 stretches are compositionally biased toward polar residues: residues 282–299 (GSHQ…TSAT) and 362–372 (LKGTSDTQKLQ). Basic and acidic residues-rich tracts occupy residues 377 to 388 (PLKESMDLKPES) and 412 to 423 (RTRDCAHWERAK). The span at 432–443 (PRLPRGRGAYRP) shows a compositional bias: low complexity.

The protein belongs to the RNF25 family. As to quaternary structure, interacts with UBE2D2, and may also interact with UBE2E1 and UBE2E3. Interacts with RELA/p65. Post-translationally, ubiquitinated; autoubiquitinated.

The protein resides in the cytoplasm. It carries out the reaction S-ubiquitinyl-[E2 ubiquitin-conjugating enzyme]-L-cysteine + [acceptor protein]-L-lysine = [E2 ubiquitin-conjugating enzyme]-L-cysteine + N(6)-ubiquitinyl-[acceptor protein]-L-lysine.. It functions in the pathway protein modification; protein ubiquitination. Functionally, E3 ubiquitin-protein ligase that plays a key role in the RNF14-RNF25 translation quality control pathway, a pathway that takes place when a ribosome has stalled during translation, and which promotes ubiquitination and degradation of translation factors on stalled ribosomes. Catalyzes ubiquitination of RPS27A in response to ribosome collisions, promoting activation of RNF14. RNF25 catalyzes ubiquitination of other ribosomal proteins on stalled ribosomes, such as RPL0, RPL1, RPL12, RPS13 and RPS17. Also involved in ubiquitination and degradation of stalled ETF1/eRF1. Independently of its function in the response to stalled ribosomes, mediates ubiquitination and subsequent proteasomal degradation of NKD2. May also stimulate transcription mediated by NF-kappa-B via its interaction with RELA/p65. In Bos taurus (Bovine), this protein is E3 ubiquitin-protein ligase RNF25 (RNF25).